A 38-amino-acid polypeptide reads, in one-letter code: Histatin-1 (38 aa).

The tract at residues 1-38 (DSHEERHHGRHGHHKYGRKFHEKHHSHRGYRSNYLYDN) is disordered. A Phosphoserine modification is found at serine 2. Positions 8 to 30 (HGRHGHHKYGRKFHEKHHSHRGY) are enriched in basic residues.

This sequence belongs to the histatin/statherin family.

It localises to the secreted. Its function is as follows. Histatins (Hsts) are cationic and histidine-rich secreted peptides mainly synthesized by saliva glands of humans and higher primates. Hsts are considered to be major precursors of the protective proteinaceous structure on tooth surfaces (enamel pellicle). This is Histatin-1 (HTN1) from Macaca fascicularis (Crab-eating macaque).